A 272-amino-acid polypeptide reads, in one-letter code: Shikimate dehydrogenase (NADP(+)) (272 aa).

Residues 14–16 and Thr-61 each bind shikimate; that span reads SKS. The active-site Proton acceptor is Lys-65. Glu-77 is an NADP(+) binding site. Asn-86 and Asp-102 together coordinate shikimate. NADP(+) contacts are provided by residues 126–130, 149–154, and Met-213; these read GAGGA and NRTYSR. Tyr-215 lines the shikimate pocket. Gly-237 serves as a coordination point for NADP(+).

This sequence belongs to the shikimate dehydrogenase family. In terms of assembly, homodimer.

The enzyme catalyses shikimate + NADP(+) = 3-dehydroshikimate + NADPH + H(+). Its pathway is metabolic intermediate biosynthesis; chorismate biosynthesis; chorismate from D-erythrose 4-phosphate and phosphoenolpyruvate: step 4/7. Its function is as follows. Involved in the biosynthesis of the chorismate, which leads to the biosynthesis of aromatic amino acids. Catalyzes the reversible NADPH linked reduction of 3-dehydroshikimate (DHSA) to yield shikimate (SA). This Enterobacter sp. (strain 638) protein is Shikimate dehydrogenase (NADP(+)).